We begin with the raw amino-acid sequence, 207 residues long: Minor capsid protein P11 (207 aa).

The tract at residues 7–23 is hydrophobic; that stretch reads VKVVAILAVLFLVYKLW. The interval 63 to 82 is disordered; that stretch reads ETDAEDDDIYTGETDDMYDG.

In terms of assembly, interacts with the major capsid protein.

It is found in the virion. In terms of biological role, one of the minor capsid proteins that constitute a network internal to the major capsid proteins and outside the lipid membrane. The minor capsid proteins glue and stabilize the capsomers. the p11 zip protein binds together the neighboring symmetrons. This is Minor capsid protein P11 from Paramecium bursaria Chlorella virus 1 (PBCV-1).